A 307-amino-acid chain; its full sequence is Coproporphyrin III ferrochelatase (307 aa).

Fe-coproporphyrin III contacts are provided by residues tyrosine 12, arginine 29, 45-46, serine 53, and tyrosine 124; that span reads RY. Residues histidine 181 and glutamate 263 each contribute to the Fe(2+) site.

It belongs to the ferrochelatase family.

Its subcellular location is the cytoplasm. It catalyses the reaction Fe-coproporphyrin III + 2 H(+) = coproporphyrin III + Fe(2+). Its pathway is porphyrin-containing compound metabolism; protoheme biosynthesis. In terms of biological role, involved in coproporphyrin-dependent heme b biosynthesis. Catalyzes the insertion of ferrous iron into coproporphyrin III to form Fe-coproporphyrin III. The protein is Coproporphyrin III ferrochelatase of Staphylococcus aureus (strain COL).